Reading from the N-terminus, the 353-residue chain is Abasic site processing protein HMCES (353 aa).

Catalysis depends on C2, which acts as the Nucleophile. C2 is modified (thiazolidine linkage to a ring-opened DNA abasic site). E127 is an active-site residue. Glycyl lysine isopeptide (Lys-Gly) (interchain with G-Cter in SUMO2) cross-links involve residues K148 and K151. S160 bears the Phosphoserine mark. Residues K274 and K275 each participate in a glycyl lysine isopeptide (Lys-Gly) (interchain with G-Cter in SUMO2) cross-link. The interval 292–353 (TKSPKKEVPD…DEPMAKKPNS (62 aa)) is disordered. The residue at position 294 (S294) is a Phosphoserine. Basic and acidic residues predominate over residues 295 to 307 (PKKEVPDSPKKDA). A Glycyl lysine isopeptide (Lys-Gly) (interchain with G-Cter in SUMO2) cross-link involves residue K305. A Phosphoserine modification is found at S321. Residues 332–338 (SFLDRWL) carry the PIP-box motif. Basic and acidic residues predominate over residues 336–353 (RWLKQEKEDEPMAKKPNS). Glycyl lysine isopeptide (Lys-Gly) (interchain with G-Cter in SUMO2) cross-links involve residues K339 and K342.

This sequence belongs to the SOS response-associated peptidase family. As to quaternary structure, interacts (via PIP-box motif) with PCNA. As to expression, expressed in embryonic stem cells.

Its subcellular location is the chromosome. Formation and reversal of DNA-protein cross-link depends on DNA context. Catalyzes formation of the thiazolidine linkage in presence of abasic sites in single-stranded DNA. Mediates the reversal of the thiazolidine cross-link in presence of double stranded DNA. In terms of biological role, sensor of abasic sites in single-stranded DNA (ssDNA) required to preserve genome integrity by promoting error-free repair of abasic sites. Acts as an enzyme that recognizes and binds abasic sites in ssDNA at replication forks and chemically modifies the lesion by forming a covalent cross-link with DNA: forms a stable thiazolidine linkage between a ring-opened abasic site and the alpha-amino and sulfhydryl substituents of its N-terminal catalytic cysteine residue. Promotes error-free repair by protecting abasic sites from translesion synthesis (TLS) polymerases and endonucleases that are error-prone and would generate mutations and double-strand breaks. The HMCES DNA-protein cross-link is then either reversed or degraded. HMCES is able to catalyze the reversal of its thiazolidine cross-link and cycle between a cross-link and a non-cross-linked state depending on DNA context: mediates self-reversal of the thiazolidine cross-link in double stranded DNA, allowing APEX1 to initiate downstream repair of abasic sites. The HMCES DNA-protein cross-link can also be degraded by the SPRTN metalloprotease following unfolding by the BRIP1/FANCJ helicase. Has preference for ssDNA, but can also accommodate double-stranded DNA with 3' or 5' overhang (dsDNA), and dsDNA-ssDNA 3' junction. Plays a protective role during somatic hypermutation of immunoglobulin genes in B-cells: acts via its ability to form covalent cross-links with abasic sites, thereby limiting the accumulation of deletions in somatic hypermutation target regions. Also involved in class switch recombination (CSR) in B-cells independently of the formation of a DNA-protein cross-link: acts by binding and protecting ssDNA overhangs to promote DNA double-strand break repair through the microhomology-mediated alternative-end-joining (Alt-EJ) pathway. Acts as a protease: mediates autocatalytic processing of its N-terminal methionine in order to expose the catalytic cysteine. The chain is Abasic site processing protein HMCES from Mus musculus (Mouse).